Consider the following 862-residue polypeptide: DNA mismatch repair protein MutS (862 aa).

G608–S615 is an ATP binding site.

Belongs to the DNA mismatch repair MutS family.

In terms of biological role, this protein is involved in the repair of mismatches in DNA. It is possible that it carries out the mismatch recognition step. This protein has a weak ATPase activity. The polypeptide is DNA mismatch repair protein MutS (Borrelia garinii subsp. bavariensis (strain ATCC BAA-2496 / DSM 23469 / PBi) (Borreliella bavariensis)).